Consider the following 59-residue polypeptide: Large ribosomal subunit protein bL32 (59 aa).

This sequence belongs to the bacterial ribosomal protein bL32 family.

In Anaeromyxobacter dehalogenans (strain 2CP-C), this protein is Large ribosomal subunit protein bL32.